We begin with the raw amino-acid sequence, 500 residues long: MNDFPWLTIIVVFPISAGSLMLFLPHRGNKVNKWYTICICILELLLTTYAFCYNFKMDDPLIQLSEDYKWINFFDFYWRMGIDGLSIGTILLTGFITTLATLAAFPVTRDSRLFHFLMLAMYSGQIGSFSSRDLLLFFIMWELELIPVYLLLAMWGGKKRLYSATKFILYTAGSSIFLLIGVLGISLYGSNEPTLNLELLANQSYPVTLEILFYIGFLIAFAVKSPIIPLHTWLPDTHGEAHYSTCMLLAGILLKMGAYGLVRINMELLPHAHSMFSPWLMVVGTIQIIYAASTSPGQRNLKKRIAYSSVSHMGFIIIGISSITDPGLNGAILQIISHGFIGAALFFLAGTSYDRIRLVYLDEMGGMAISIPKIFTMFTILSMASLALPGMSGFIAELIVFFGIITSQKYFLIFKILIIFVMAIGMILTPIYLLSMSRQMFYGYKLINVKNFSFFDSGPRELFLSISILIPIIGIGIYPDFVLSLASDKVESILSNYFYG.

A run of 15 helical transmembrane segments spans residues 4-24, 35-55, 87-107, 113-130, 134-154, 167-187, 211-231, 242-262, 272-292, 305-325, 330-350, 364-384, 386-406, 411-431, and 462-482; these read FPWLTIIVVFPISAGSLMLFL, YTICICILELLLTTYAFCYNF, IGTILLTGFITTLATLAAFPV, LFHFLMLAMYSGQIGSFS, LLLFFIMWELELIPVYLLLAM, FILYTAGSSIFLLIGVLGISL, ILFYIGFLIAFAVKSPIIPLH, HYSTCMLLAGILLKMGAYGLV, AHSMFSPWLMVVGTIQIIYAA, IAYSSVSHMGFIIIGISSITD, GAILQIISHGFIGAALFFLAG, MGGMAISIPKIFTMFTILSMA, LALPGMSGFIAELIVFFGIIT, FLIFKILIIFVMAIGMILTPI, and LFLSISILIPIIGIGIYPDFV.

Belongs to the complex I subunit 4 family.

It localises to the plastid. It is found in the chloroplast thylakoid membrane. The enzyme catalyses a plastoquinone + NADH + (n+1) H(+)(in) = a plastoquinol + NAD(+) + n H(+)(out). It catalyses the reaction a plastoquinone + NADPH + (n+1) H(+)(in) = a plastoquinol + NADP(+) + n H(+)(out). In Capsella bursa-pastoris (Shepherd's purse), this protein is NAD(P)H-quinone oxidoreductase chain 4, chloroplastic.